The following is a 172-amino-acid chain: MANKEATVAELENLFDSSTAVLLTEYRGLTVAQLKTLRTSISEHATYAVVKNTLTKIAANKKGISSFDEELVGPSAIAFVHGDPVAVAKSLRDFAKANPLLVVKSGYFDGNPLTAEEVGKLADLESREVLLAKLAGAFKASLFGAAYLFNAPLSQAVRTVDALREKQESAAE.

Belongs to the universal ribosomal protein uL10 family. As to quaternary structure, part of the ribosomal stalk of the 50S ribosomal subunit. The N-terminus interacts with L11 and the large rRNA to form the base of the stalk. The C-terminus forms an elongated spine to which L12 dimers bind in a sequential fashion forming a multimeric L10(L12)X complex.

Its function is as follows. Forms part of the ribosomal stalk, playing a central role in the interaction of the ribosome with GTP-bound translation factors. The polypeptide is Large ribosomal subunit protein uL10 (Leifsonia xyli subsp. xyli (strain CTCB07)).